Here is a 190-residue protein sequence, read N- to C-terminus: Putative manganese efflux pump MntP (190 aa).

6 consecutive transmembrane segments (helical) span residues 6-26, 36-56, 61-81, 108-128, 138-158, and 169-189; these read IWLLAISLAMDCFTVSITSGI, FFIMAFFFGLFQAVMPLIGWF, FSHLIEDYDHWIAFGLLAFWG, LAIATSIDALAIGISFAFVGI, IVIIGFTSFVISTLGSLIGVF, and LWGGLVLIIIGVKILIEHLFL.

It belongs to the MntP (TC 9.B.29) family.

The protein localises to the cell inner membrane. Its function is as follows. Probably functions as a manganese efflux pump. The chain is Putative manganese efflux pump MntP from Phocaeicola vulgatus (strain ATCC 8482 / DSM 1447 / JCM 5826 / CCUG 4940 / NBRC 14291 / NCTC 11154) (Bacteroides vulgatus).